We begin with the raw amino-acid sequence, 158 residues long: Fluoride-specific ion channel FluC 2 (158 aa).

4 helical membrane passes run Ala25–Thr45, Trp63–Ile83, Pro95–Ile115, and Thr126–Ala146. Positions 103 and 106 each coordinate Na(+).

Belongs to the fluoride channel Fluc/FEX (TC 1.A.43) family.

Its subcellular location is the cell membrane. It catalyses the reaction fluoride(in) = fluoride(out). With respect to regulation, na(+) is not transported, but it plays an essential structural role and its presence is essential for fluoride channel function. Fluoride-specific ion channel. Important for reducing fluoride concentration in the cell, thus reducing its toxicity. This is Fluoride-specific ion channel FluC 2 from Streptomyces avermitilis (strain ATCC 31267 / DSM 46492 / JCM 5070 / NBRC 14893 / NCIMB 12804 / NRRL 8165 / MA-4680).